The chain runs to 243 residues: NAD(P)H-quinone oxidoreductase subunit K (243 aa).

[4Fe-4S] cluster is bound by residues C59, C60, C124, and C155.

This sequence belongs to the complex I 20 kDa subunit family. In terms of assembly, NDH-1 can be composed of about 15 different subunits; different subcomplexes with different compositions have been identified which probably have different functions. [4Fe-4S] cluster serves as cofactor.

It is found in the cellular thylakoid membrane. It carries out the reaction a plastoquinone + NADH + (n+1) H(+)(in) = a plastoquinol + NAD(+) + n H(+)(out). The enzyme catalyses a plastoquinone + NADPH + (n+1) H(+)(in) = a plastoquinol + NADP(+) + n H(+)(out). NDH-1 shuttles electrons from an unknown electron donor, via FMN and iron-sulfur (Fe-S) centers, to quinones in the respiratory and/or the photosynthetic chain. The immediate electron acceptor for the enzyme in this species is believed to be plastoquinone. Couples the redox reaction to proton translocation, and thus conserves the redox energy in a proton gradient. Cyanobacterial NDH-1 also plays a role in inorganic carbon-concentration. The polypeptide is NAD(P)H-quinone oxidoreductase subunit K (Picosynechococcus sp. (strain ATCC 27264 / PCC 7002 / PR-6) (Agmenellum quadruplicatum)).